The sequence spans 280 residues: Putative aquaporin-10 (280 aa).

Topologically, residues 1-8 are cytoplasmic; that stretch reads MEAVSSEY. The helical transmembrane segment at 9–29 threads the bilayer; that stretch reads YFPLYSALGYFALVFGIGEIA. The Extracellular segment spans residues 30–64; that stretch reads RIITAKYVSPRGNSQLFLYELIGTIQMCTCVYENG. The helical transmembrane segment at 65 to 85 threads the bilayer; it reads IIFKNYGFPAIFICVALLLTA. The Cytoplasmic portion of the chain corresponds to 86–114; it reads GNIFNRGAMTNCAPIFEQFVFGNLGSSKF. The helical transmembrane segment at 115–135 threads the bilayer; it reads LTILSAQLIGATFASKFAYLI. Residues 136–164 lie on the Extracellular side of the membrane; the sequence is WNITAPYSTAHLENASNLECILHYKQTAG. The chain crosses the membrane as a helical span at residues 165 to 185; it reads IVIGFEIVGAFVVRIVVAQLL. The Cytoplasmic segment spans residues 186–193; the sequence is ARPALIKL. Residues 194–214 traverse the membrane as a helical segment; it reads IPFAISAYLSLALYVVGVPGL. Over 215–233 the chain is Extracellular; that stretch reads NPIVATARLYGCRGIDNSS. The chain crosses the membrane as a helical span at residues 234 to 254; sequence FFILYWFCPVLGWLTGAYVVG. At 255–280 the chain is on the cytoplasmic side; it reads QKSPSKKSAKDVKAEKKAKAAAKKSD. The segment at 256-280 is disordered; that stretch reads KSPSKKSAKDVKAEKKAKAAAKKSD. Residues 262–280 show a composition bias toward basic and acidic residues; the sequence is SAKDVKAEKKAKAAAKKSD.

The protein belongs to the MIP/aquaporin (TC 1.A.8) family.

The protein localises to the membrane. The polypeptide is Putative aquaporin-10 (aqp-10) (Caenorhabditis elegans).